A 511-amino-acid polypeptide reads, in one-letter code: Vesicular acetylcholine transporter (511 aa).

The Cytoplasmic segment spans residues 1–36; that stretch reads MVVGQAKAAMGKISSAIGERSKRISGAMNEPLRKRK. A helical membrane pass occupies residues 37-57; sequence ILLVIVCIAMLLDNMLYMVIV. Residues 58 to 108 lie on the Lumenal, vesicle side of the membrane; sequence PIVPNYLETIRTYKLVYITIPSNGTNGSLLNSTQRAVLERNPNANEDIQIG. Asn80, Asn83, and Asn88 each carry an N-linked (GlcNAc...) asparagine glycan. A helical membrane pass occupies residues 109–129; that stretch reads VLFASKAILQLLSNPFTGTFI. At 130–135 the chain is on the cytoplasmic side; sequence DRVGYD. Residues 136 to 156 form a helical membrane-spanning segment; it reads IPLLIGLTIMFFSTITFAFGE. Residues 157–165 are Lumenal, vesicle-facing; the sequence is SYAILFAAR. The chain crosses the membrane as a helical span at residues 166–186; it reads SLQGLGSAFADTSGIAMIADK. The Cytoplasmic segment spans residues 187 to 197; that stretch reads YTEESERTQAL. Residues 198–218 traverse the membrane as a helical segment; it reads GIALAFISFGSLVAPPFGGVL. Residues 219–225 are Lumenal, vesicle-facing; it reads YQFAGKW. A helical membrane pass occupies residues 226–246; sequence VPFLVLSFVCLLDGILLLMVV. The Cytoplasmic segment spans residues 247–267; sequence TPFASRTRGNTLQGTPIHKLM. A helical membrane pass occupies residues 268 to 288; the sequence is IDPYIAVVAGALTTCNIPLAF. The Lumenal, vesicle portion of the chain corresponds to 289–306; sequence LEPTISNWMKKTMNASEW. Residue Asn302 is glycosylated (N-linked (GlcNAc...) asparagine). Residues 307–327 traverse the membrane as a helical segment; the sequence is QMGITWLPAFFPHILGVYITV. At 328-337 the chain is on the cytoplasmic side; that stretch reads KLAAKYPNYQ. Residues 338 to 358 traverse the membrane as a helical segment; that stretch reads WLYGAFGLVIIGVSSCTIPAC. The Lumenal, vesicle segment spans residues 359-363; that stretch reads RNFEE. Residues 364-384 traverse the membrane as a helical segment; it reads LIIPLCALCFGIALVDTALLP. Over 385–400 the chain is Cytoplasmic; it reads TLAFLVDIRYVSVYGS. A helical transmembrane segment spans residues 401 to 421; sequence VYAIADISYSVAYALGPIMAG. Over 422-428 the chain is Lumenal, vesicle; the sequence is QIVHDLG. A helical transmembrane segment spans residues 429 to 449; the sequence is FVQLNLGMGLVNILYAPALLF. At 450-511 the chain is on the cytoplasmic side; that stretch reads LRNVCQMKPS…VLSDQEGYSE (62 aa). The interval 486-511 is disordered; it reads AKEPHGTSSGNHSVHAVLSDQEGYSE.

This sequence belongs to the major facilitator superfamily. Vesicular transporter family. In terms of tissue distribution, high expression in the electric lobe of the brain.

The protein localises to the membrane. In terms of biological role, involved in acetylcholine transport into synaptic vesicles. The chain is Vesicular acetylcholine transporter from Torpedo torpedo (Common torpedo).